A 1165-amino-acid polypeptide reads, in one-letter code: Linoleate diol synthase (1165 aa).

The fatty acid alpha-dioxygenase stretch occupies residues 104–448 (TDGLINDLWD…DGAFDDTELV (345 aa)). His-203 serves as a coordination point for heme b. 5 residues coordinate Ca(2+): Asp-204, Ser-219, Tyr-221, Asp-223, and Ser-225. The active site involves Tyr-376. His-379 contributes to the heme b binding site. Residues 666–1161 (EVLSNQKDYK…ATTMKINWEG (496 aa)) are epoxy alcohol synthase. Position 1080 (Cys-1080) interacts with heme. Residues 1114 to 1134 (RSYPASQWPGQAGRPPRDPAW) are disordered.

The protein belongs to the peroxidase family. Homotetramer. Heme b serves as cofactor. It depends on Ca(2+) as a cofactor. Requires heme as cofactor. In terms of processing, the N-terminus is blocked.

It catalyses the reaction (9Z,12Z)-octadecadienoate + O2 = (8R,9Z,12Z)-8-hydroperoxyoctadeca-9,12-dienoate. It carries out the reaction (8R,9Z,12Z)-8-hydroperoxyoctadeca-9,12-dienoate = (7S,8S,9Z,12Z)-7,8-dihydroxyoctadeca-9,12-dienoate. Functionally, 7,8-linoleate diol synthase is a bifunctional enzyme that converts linoleic acid (18:2n-6) into 8-hydroperoxy-8(E),12(Z)-octadecadienoic acid (8-HPODE) and then catalyzes the isomerization of the resulting hydroperoxide to 7,8-dihydroxy-9(Z),12(Z)-octadecadienoic acid (7,8-DiHODE). This chain is Linoleate diol synthase, found in Gaeumannomyces graminis (Turf grass take-all root rot fungus).